The sequence spans 381 residues: Transaldolase 2 (381 aa).

The active-site Schiff-base intermediate with substrate is lysine 141.

The protein belongs to the transaldolase family. Type 2 subfamily.

It is found in the cytoplasm. It carries out the reaction D-sedoheptulose 7-phosphate + D-glyceraldehyde 3-phosphate = D-erythrose 4-phosphate + beta-D-fructose 6-phosphate. The protein operates within carbohydrate degradation; pentose phosphate pathway; D-glyceraldehyde 3-phosphate and beta-D-fructose 6-phosphate from D-ribose 5-phosphate and D-xylulose 5-phosphate (non-oxidative stage): step 2/3. In terms of biological role, transaldolase is important for the balance of metabolites in the pentose-phosphate pathway. The protein is Transaldolase 2 (tal2) of Nostoc punctiforme (strain ATCC 29133 / PCC 73102).